Reading from the N-terminus, the 189-residue chain is GTPase HRas (189 aa).

A GTP-binding site is contributed by 10 to 17 (GAKGVGKS). Positions 32 to 40 (YDPTIEDSY) match the Effector region motif. GTP contacts are provided by residues 57–61 (DTAGQ) and 116–119 (NKCD). S-palmitoyl cysteine; by host attachment occurs at residues Cys-181 and Cys-184. Cysteine methyl ester; by host is present on Cys-186. Cys-186 carries S-farnesyl cysteine; by host lipidation. The propeptide at 187–189 (VLS) is removed in mature form.

The protein belongs to the small GTPase superfamily. Ras family.

It is found in the host cell membrane. It catalyses the reaction GTP + H2O = GDP + phosphate + H(+). Its activity is regulated as follows. Alternates between an inactive form bound to GDP and an active form bound to GTP. Activated by a guanine nucleotide-exchange factor (GEF) and inactivated by a GTPase-activating protein (GAP). The chain is GTPase HRas (H-RAS) from Moloney murine sarcoma virus (MoMSV).